Reading from the N-terminus, the 221-residue chain is MRSQLSLMGKKEGMIHVFDKDGNLVACSVISVGSNVVTQIKVDSTDGYNAIQMGANEINVPEKTLEKRMNKPELGHLKKSGSRVFGLLKEVRLSEDAINEVSLGNEFGLEVLEDISSVDISGVSKGKGFQGVMKRFGFRGGPKTHGSGFHRHAGSIGMRSTPGRCFPGSKRPSHMGTVNVTVKNLEVVKIDLEKKVLLVKGAIPGPRGSVVVIRRSSRAKG.

A disordered region spans residues 140-160 (GGPKTHGSGFHRHAGSIGMRS).

The protein belongs to the universal ribosomal protein uL3 family. Part of the 50S ribosomal subunit. Forms a cluster with proteins L14 and L19.

Its function is as follows. One of the primary rRNA binding proteins, it binds directly near the 3'-end of the 23S rRNA, where it nucleates assembly of the 50S subunit. This Chlamydia caviae (strain ATCC VR-813 / DSM 19441 / 03DC25 / GPIC) (Chlamydophila caviae) protein is Large ribosomal subunit protein uL3.